The sequence spans 921 residues: Isoleucine--tRNA ligase (921 aa).

The 'HIGH' region motif lies at 59–69; the sequence is PYANGHLHIGH. E569 contacts L-isoleucyl-5'-AMP. The 'KMSKS' region signature appears at 610-614; that stretch reads KMSKS. Position 613 (K613) interacts with ATP. The Zn(2+) site is built by C896, C899, C911, and C914.

Belongs to the class-I aminoacyl-tRNA synthetase family. IleS type 1 subfamily. In terms of assembly, monomer. The cofactor is Zn(2+).

It is found in the cytoplasm. The enzyme catalyses tRNA(Ile) + L-isoleucine + ATP = L-isoleucyl-tRNA(Ile) + AMP + diphosphate. Its function is as follows. Catalyzes the attachment of isoleucine to tRNA(Ile). As IleRS can inadvertently accommodate and process structurally similar amino acids such as valine, to avoid such errors it has two additional distinct tRNA(Ile)-dependent editing activities. One activity is designated as 'pretransfer' editing and involves the hydrolysis of activated Val-AMP. The other activity is designated 'posttransfer' editing and involves deacylation of mischarged Val-tRNA(Ile). This Campylobacter hominis (strain ATCC BAA-381 / DSM 21671 / CCUG 45161 / LMG 19568 / NCTC 13146 / CH001A) protein is Isoleucine--tRNA ligase.